An 80-amino-acid chain; its full sequence is MTKDNKTFEDRLDRLKAIVSALEKGDLPLEEGVALFKEGQTLSKECATQLEKARNEVKIVTGGEVEDFDVDTEEDTADDS.

Belongs to the XseB family. As to quaternary structure, heterooligomer composed of large and small subunits.

Its subcellular location is the cytoplasm. The enzyme catalyses Exonucleolytic cleavage in either 5'- to 3'- or 3'- to 5'-direction to yield nucleoside 5'-phosphates.. Bidirectionally degrades single-stranded DNA into large acid-insoluble oligonucleotides, which are then degraded further into small acid-soluble oligonucleotides. The protein is Exodeoxyribonuclease 7 small subunit of Maridesulfovibrio salexigens (strain ATCC 14822 / DSM 2638 / NCIMB 8403 / VKM B-1763) (Desulfovibrio salexigens).